The chain runs to 67 residues: MLYPSIDNLLLKIDSKYSLVTVAAKRARYMQLENDKGVLPSYQSDKFVGKALEEIHAGKLVLKNDEK.

This sequence belongs to the RNA polymerase subunit omega family. As to quaternary structure, the RNAP catalytic core consists of 2 alpha, 1 beta, 1 beta' and 1 omega subunit. When a sigma factor is associated with the core the holoenzyme is formed, which can initiate transcription.

The catalysed reaction is RNA(n) + a ribonucleoside 5'-triphosphate = RNA(n+1) + diphosphate. Promotes RNA polymerase assembly. Latches the N- and C-terminal regions of the beta' subunit thereby facilitating its interaction with the beta and alpha subunits. This is DNA-directed RNA polymerase subunit omega from Listeria welshimeri serovar 6b (strain ATCC 35897 / DSM 20650 / CCUG 15529 / CIP 8149 / NCTC 11857 / SLCC 5334 / V8).